We begin with the raw amino-acid sequence, 239 residues long: MTKAPIAGNRTGRKLGQRVKNKKMKASSRQWLERHINDPYVQRAQLEGYRARAAFKLLEIDEKHHILRGARRIIDLGAAPGSWSQIAAKVTGSTDDDIRVAAIDFLEMTQLPGVKILQLDFLDPSAPEKLLEAVGGTPDLVISDMAAPTTGHHRTDHLRTMHLCEVAAHFAVEVLGEGGHFLTKTFQGGTERELLAMLKQNFRQVVHVKPNSSRAESVEMFLLAKGFKGRKAEGEAEEA.

The disordered stretch occupies residues 1-20 (MTKAPIAGNRTGRKLGQRVK). Over residues 11 to 20 (TGRKLGQRVK) the composition is skewed to basic residues. The S-adenosyl-L-methionine site is built by Gly81, Trp83, Asp104, Asp120, and Asp144. Lys184 acts as the Proton acceptor in catalysis.

It belongs to the class I-like SAM-binding methyltransferase superfamily. RNA methyltransferase RlmE family.

Its subcellular location is the cytoplasm. It catalyses the reaction uridine(2552) in 23S rRNA + S-adenosyl-L-methionine = 2'-O-methyluridine(2552) in 23S rRNA + S-adenosyl-L-homocysteine + H(+). Its function is as follows. Specifically methylates the uridine in position 2552 of 23S rRNA at the 2'-O position of the ribose in the fully assembled 50S ribosomal subunit. In Rhizobium johnstonii (strain DSM 114642 / LMG 32736 / 3841) (Rhizobium leguminosarum bv. viciae), this protein is Ribosomal RNA large subunit methyltransferase E.